Consider the following 642-residue polypeptide: Threonine--tRNA ligase (642 aa).

The 63-residue stretch at 1 to 63 (MNDITVTLPD…YNDARVVIVT (63 aa)) folds into the TGS domain. Residues 242 to 533 (DHRKIGQELD…LIEHFNGKFP (292 aa)) form a catalytic region. Residues Cys-334, His-385, and His-510 each contribute to the Zn(2+) site.

It belongs to the class-II aminoacyl-tRNA synthetase family. In terms of assembly, homodimer. Zn(2+) serves as cofactor.

The protein resides in the cytoplasm. It catalyses the reaction tRNA(Thr) + L-threonine + ATP = L-threonyl-tRNA(Thr) + AMP + diphosphate + H(+). In terms of biological role, catalyzes the attachment of threonine to tRNA(Thr) in a two-step reaction: L-threonine is first activated by ATP to form Thr-AMP and then transferred to the acceptor end of tRNA(Thr). This is Threonine--tRNA ligase from Haloquadratum walsbyi (strain DSM 16790 / HBSQ001).